The chain runs to 106 residues: Nucleoid-associated protein Abu_0429 (106 aa).

Belongs to the YbaB/EbfC family. In terms of assembly, homodimer.

It localises to the cytoplasm. It is found in the nucleoid. Binds to DNA and alters its conformation. May be involved in regulation of gene expression, nucleoid organization and DNA protection. The protein is Nucleoid-associated protein Abu_0429 of Aliarcobacter butzleri (strain RM4018) (Arcobacter butzleri).